The sequence spans 137 residues: ATP synthase epsilon chain (137 aa).

The protein belongs to the ATPase epsilon chain family. In terms of assembly, F-type ATPases have 2 components, CF(1) - the catalytic core - and CF(0) - the membrane proton channel. CF(1) has five subunits: alpha(3), beta(3), gamma(1), delta(1), epsilon(1). CF(0) has three main subunits: a, b and c.

The protein resides in the cellular thylakoid membrane. In terms of biological role, produces ATP from ADP in the presence of a proton gradient across the membrane. The protein is ATP synthase epsilon chain of Synechococcus sp. (strain JA-2-3B'a(2-13)) (Cyanobacteria bacterium Yellowstone B-Prime).